We begin with the raw amino-acid sequence, 260 residues long: Carbonic anhydrase 3 (260 aa).

N-acetylalanine is present on Ala2. Residues 3–259 (KEWGYASHNG…VKGRVVRASF (257 aa)) enclose the Alpha-carbonic anhydrase domain. Residues Ser29, Ser43, Ser48, Ser50, and Ser55 each carry the phosphoserine modification. Positions 64–67 (KTCR) are involved in proton transfer. Thr73 carries the phosphothreonine modification. His94, His96, and His119 together coordinate Zn(2+). Residue Tyr127 is modified to Phosphotyrosine. Thr129 and Thr176 each carry phosphothreonine. 2 positions are modified to S-glutathionyl cysteine: Cys182 and Cys187. Residue 198–199 (TT) coordinates substrate. Thr216 is subject to Phosphothreonine. Ser219 is modified (phosphoserine).

This sequence belongs to the alpha-carbonic anhydrase family. Requires Zn(2+) as cofactor. S-thiolated both by thiol-disulfide exchange with glutathione disulfide and by oxyradical-initiated S-thiolation with reduced glutathione. Post-translationally, S-glutathionylated in hepatocytes under oxidative stress. In terms of tissue distribution, expressed at lower levels in adipose tissue from animals that were either genetically obese or had experimentally induced obesity.

Its subcellular location is the cytoplasm. The catalysed reaction is hydrogencarbonate + H(+) = CO2 + H2O. With respect to regulation, inhibited by acetazolamide. In terms of biological role, reversible hydration of carbon dioxide. In Mus musculus (Mouse), this protein is Carbonic anhydrase 3.